Here is a 316-residue protein sequence, read N- to C-terminus: 4-hydroxy-3-methylbut-2-enyl diphosphate reductase (316 aa).

Position 12 (Cys-12) interacts with [4Fe-4S] cluster. Residues His-41 and His-74 each coordinate (2E)-4-hydroxy-3-methylbut-2-enyl diphosphate. The dimethylallyl diphosphate site is built by His-41 and His-74. 2 residues coordinate isopentenyl diphosphate: His-41 and His-74. Residue Cys-96 coordinates [4Fe-4S] cluster. His-124 provides a ligand contact to (2E)-4-hydroxy-3-methylbut-2-enyl diphosphate. His-124 is a binding site for dimethylallyl diphosphate. His-124 lines the isopentenyl diphosphate pocket. The active-site Proton donor is Glu-126. (2E)-4-hydroxy-3-methylbut-2-enyl diphosphate is bound at residue Thr-167. Position 197 (Cys-197) interacts with [4Fe-4S] cluster. Residues Ser-225, Ser-226, Asn-227, and Ser-269 each contribute to the (2E)-4-hydroxy-3-methylbut-2-enyl diphosphate site. Dimethylallyl diphosphate-binding residues include Ser-225, Ser-226, Asn-227, and Ser-269. Ser-225, Ser-226, Asn-227, and Ser-269 together coordinate isopentenyl diphosphate.

Belongs to the IspH family. As to quaternary structure, homodimer. It depends on [4Fe-4S] cluster as a cofactor.

The enzyme catalyses isopentenyl diphosphate + 2 oxidized [2Fe-2S]-[ferredoxin] + H2O = (2E)-4-hydroxy-3-methylbut-2-enyl diphosphate + 2 reduced [2Fe-2S]-[ferredoxin] + 2 H(+). It catalyses the reaction dimethylallyl diphosphate + 2 oxidized [2Fe-2S]-[ferredoxin] + H2O = (2E)-4-hydroxy-3-methylbut-2-enyl diphosphate + 2 reduced [2Fe-2S]-[ferredoxin] + 2 H(+). It functions in the pathway isoprenoid biosynthesis; dimethylallyl diphosphate biosynthesis; dimethylallyl diphosphate from (2E)-4-hydroxy-3-methylbutenyl diphosphate: step 1/1. The protein operates within isoprenoid biosynthesis; isopentenyl diphosphate biosynthesis via DXP pathway; isopentenyl diphosphate from 1-deoxy-D-xylulose 5-phosphate: step 6/6. In terms of biological role, catalyzes the conversion of 1-hydroxy-2-methyl-2-(E)-butenyl 4-diphosphate (HMBPP) into a mixture of isopentenyl diphosphate (IPP) and dimethylallyl diphosphate (DMAPP). Acts in the terminal step of the DOXP/MEP pathway for isoprenoid precursor biosynthesis. The sequence is that of 4-hydroxy-3-methylbut-2-enyl diphosphate reductase from Salmonella typhi.